The following is a 654-amino-acid chain: Coiled-coil domain-containing protein 30 (654 aa).

Positions 38-65 are disordered; it reads TLESRRDPNSSLQKEFPQHQDEDQSRAA. A compositionally biased stretch (basic and acidic residues) spans 53–62; that stretch reads FPQHQDEDQS. 2 coiled-coil regions span residues 97 to 244 and 276 to 559; these read REER…LDNA and KSQQ…QIIR. The interval 614 to 654 is disordered; the sequence is AAAIPKSPEPLSRSQDSESGYINVTSLKETHNTQGDQKPEL. Positions 625-654 are enriched in polar residues; it reads SRSQDSESGYINVTSLKETHNTQGDQKPEL.

It belongs to the prefoldin subunit beta family.

The polypeptide is Coiled-coil domain-containing protein 30 (Ccdc30) (Mus musculus (Mouse)).